The primary structure comprises 817 residues: Alpha-bisabolene synthase (817 aa).

5 residues coordinate Mg(2+): Asp566, Asp570, Asp713, Thr717, and Glu721. Residues 566-570 (DDMYD) carry the DDXXD motif motif.

It belongs to the terpene synthase family. Tpsd subfamily. Requires Mg(2+) as cofactor. Mn(2+) is required as a cofactor. It depends on K(+) as a cofactor.

It is found in the cytoplasm. The catalysed reaction is (2E,6E)-farnesyl diphosphate = (E,R)-alpha-bisabolene + diphosphate. It participates in terpene metabolism; oleoresin biosynthesis. In terms of biological role, converts farnesyl diphosphate to alpha-bisabolene. Involved in defensive oleoresin formation in conifers in response to insect attack or other injury. Involved in sesquiterpene (C15) olefins biosynthesis. The sequence is that of Alpha-bisabolene synthase (ag1) from Abies grandis (Grand fir).